Reading from the N-terminus, the 122-residue chain is Large ribosomal subunit protein uL14 (122 aa).

Belongs to the universal ribosomal protein uL14 family. In terms of assembly, part of the 50S ribosomal subunit. Forms a cluster with proteins L3 and L19. In the 70S ribosome, L14 and L19 interact and together make contacts with the 16S rRNA in bridges B5 and B8.

Binds to 23S rRNA. Forms part of two intersubunit bridges in the 70S ribosome. The polypeptide is Large ribosomal subunit protein uL14 (Wolinella succinogenes (strain ATCC 29543 / DSM 1740 / CCUG 13145 / JCM 31913 / LMG 7466 / NCTC 11488 / FDC 602W) (Vibrio succinogenes)).